The sequence spans 239 residues: Ribosomal RNA small subunit methyltransferase G (239 aa).

S-adenosyl-L-methionine is bound by residues glycine 78, phenylalanine 83, 129-130, and arginine 148; that span reads AE.

Belongs to the methyltransferase superfamily. RNA methyltransferase RsmG family.

The protein resides in the cytoplasm. Its function is as follows. Specifically methylates the N7 position of a guanine in 16S rRNA. The polypeptide is Ribosomal RNA small subunit methyltransferase G (Desulfitobacterium hafniense (strain Y51)).